The primary structure comprises 309 residues: tRNA dimethylallyltransferase (309 aa).

Position 11 to 18 (11 to 18) interacts with ATP; that stretch reads GPTATGKS. 13-18 is a binding site for substrate; it reads TATGKS.

It belongs to the IPP transferase family. As to quaternary structure, monomer. Mg(2+) is required as a cofactor.

It catalyses the reaction adenosine(37) in tRNA + dimethylallyl diphosphate = N(6)-dimethylallyladenosine(37) in tRNA + diphosphate. Its function is as follows. Catalyzes the transfer of a dimethylallyl group onto the adenine at position 37 in tRNAs that read codons beginning with uridine, leading to the formation of N6-(dimethylallyl)adenosine (i(6)A). The chain is tRNA dimethylallyltransferase from Rhodococcus jostii (strain RHA1).